Reading from the N-terminus, the 121-residue chain is Heme-degrading monooxygenase (121 aa).

Residues 2–101 (IIVTNTIKVE…EQREDRKGIV (100 aa)) form the ABM domain. Residue Asn6 coordinates Fe cation. The tract at residues 76–98 (KSDSFKKAHGRTKDTREQREDRK) is disordered. Basic and acidic residues predominate over residues 78-98 (DSFKKAHGRTKDTREQREDRK). Heme is bound at residue His84.

This sequence belongs to the antibiotic biosynthesis monooxygenase family. Heme-degrading monooxygenase IsdG subfamily. Homodimer.

Its subcellular location is the cytoplasm. It catalyses the reaction heme b + 3 reduced [NADPH--hemoprotein reductase] + 3 O2 = biliverdin IXalpha + CO + Fe(2+) + 3 oxidized [NADPH--hemoprotein reductase] + 3 H2O + H(+). Functionally, allows bacterial pathogens to use the host heme as an iron source. Catalyzes the oxidative degradation of the heme macrocyclic porphyrin ring to the biliverdin in the presence of a suitable electron donor such as ascorbate or NADPH--cytochrome P450 reductase, with subsequent release of free iron. The sequence is that of Heme-degrading monooxygenase from Listeria welshimeri serovar 6b (strain ATCC 35897 / DSM 20650 / CCUG 15529 / CIP 8149 / NCTC 11857 / SLCC 5334 / V8).